The primary structure comprises 587 residues: Bifunctional lycopene cyclase/phytoene synthase (587 aa).

Residues 1–242 are lycopene beta-cyclase; it reads MGYDYALVHV…IVFGIAAFDK (242 aa). Transmembrane regions (helical) follow at residues 8–28, 35–55, 77–97, 120–140, 150–170, 172–192, and 220–240; these read VHVK…YPVF, RTLF…SYLI, AEEL…YIIL, GKLV…WLIA, LILV…AHFL, ALPL…LWIV, and IEEA…IAAF. The phytoene synthase stretch occupies residues 249–587; the sequence is AFPEKFDKPA…WVAWSTLMAA (339 aa).

In the N-terminal section; belongs to the lycopene beta-cyclase family. The protein in the C-terminal section; belongs to the phytoene/squalene synthase family.

The protein resides in the membrane. It carries out the reaction all-trans-lycopene = gamma-carotene. The enzyme catalyses gamma-carotene = all-trans-beta-carotene. It catalyses the reaction 2 (2E,6E,10E)-geranylgeranyl diphosphate = 15-cis-phytoene + 2 diphosphate. Its pathway is carotenoid biosynthesis; beta-carotene biosynthesis. The protein operates within carotenoid biosynthesis; phytoene biosynthesis; all-trans-phytoene from geranylgeranyl diphosphate: step 1/1. Its function is as follows. Bifunctional enzyme that catalyzes the reactions from geranylgeranyl diphosphate to phytoene (phytoene synthase) and lycopene to beta-carotene via the intermediate gamma-carotene (lycopene cyclase). This chain is Bifunctional lycopene cyclase/phytoene synthase, found in Colletotrichum graminicola (strain M1.001 / M2 / FGSC 10212) (Maize anthracnose fungus).